A 348-amino-acid polypeptide reads, in one-letter code: Calcium-gated potassium channel TvoK (348 aa).

The next 3 helical transmembrane spans lie at 19–39, 52–72, and 80–100; these read LTKV…LEFL, YFTA…GDVV, and VVAM…TATI. The RCK N-terminal domain maps to 120–246; sequence KNHTIICNWN…VSAGATEVLS (127 aa). Residues 266 to 348 enclose the RCK C-terminal domain; it reads DFILKSLSET…KKEVEEAIKG (83 aa).

In terms of assembly, heterooctamer composed of four full-length subunits and four soluble RCK domains.

The protein localises to the cell membrane. Calcium-gated potassium channel. Can also be activated by Mg(2+), Mn(2+) and Ni(2+). The sequence is that of Calcium-gated potassium channel TvoK from Thermoplasma volcanium (strain ATCC 51530 / DSM 4299 / JCM 9571 / NBRC 15438 / GSS1).